A 161-amino-acid polypeptide reads, in one-letter code: Probable ribosome biogenesis protein RLP24 (161 aa).

Belongs to the eukaryotic ribosomal protein eL24 family. Associated with nucleolar and cytoplasmic pre-60S particles. At the end of biogenesis it dissociates from cytoplasmic pre-60S particles and is likely to be exchanged for its ribosomal homolog, RPL24.

The protein localises to the nucleus. The protein resides in the nucleolus. Involved in the biogenesis of the 60S ribosomal subunit. Ensures the docking of GTPBP4/NOG1 to pre-60S particles. The chain is Probable ribosome biogenesis protein RLP24 (rsl24d1) from Danio rerio (Zebrafish).